The primary structure comprises 132 residues: Phosphoribosyl-AMP cyclohydrolase (132 aa).

Residue D82 coordinates Mg(2+). Residue C83 participates in Zn(2+) binding. Mg(2+)-binding residues include D84 and D86. 2 residues coordinate Zn(2+): C99 and C106.

This sequence belongs to the PRA-CH family. Homodimer. Requires Mg(2+) as cofactor. Zn(2+) is required as a cofactor.

Its subcellular location is the cytoplasm. It carries out the reaction 1-(5-phospho-beta-D-ribosyl)-5'-AMP + H2O = 1-(5-phospho-beta-D-ribosyl)-5-[(5-phospho-beta-D-ribosylamino)methylideneamino]imidazole-4-carboxamide. The protein operates within amino-acid biosynthesis; L-histidine biosynthesis; L-histidine from 5-phospho-alpha-D-ribose 1-diphosphate: step 3/9. In terms of biological role, catalyzes the hydrolysis of the adenine ring of phosphoribosyl-AMP. In Paramagnetospirillum magneticum (strain ATCC 700264 / AMB-1) (Magnetospirillum magneticum), this protein is Phosphoribosyl-AMP cyclohydrolase.